The sequence spans 149 residues: Nucleoside diphosphate kinase (149 aa).

ATP-binding residues include Lys9, Phe57, Arg85, Thr91, Arg102, and Asn112. His115 serves as the catalytic Pros-phosphohistidine intermediate.

This sequence belongs to the NDK family. As to quaternary structure, homotetramer. Mg(2+) is required as a cofactor.

Its subcellular location is the cytoplasm. The catalysed reaction is a 2'-deoxyribonucleoside 5'-diphosphate + ATP = a 2'-deoxyribonucleoside 5'-triphosphate + ADP. The enzyme catalyses a ribonucleoside 5'-diphosphate + ATP = a ribonucleoside 5'-triphosphate + ADP. Major role in the synthesis of nucleoside triphosphates other than ATP. The ATP gamma phosphate is transferred to the NDP beta phosphate via a ping-pong mechanism, using a phosphorylated active-site intermediate. In Herpetosiphon aurantiacus (strain ATCC 23779 / DSM 785 / 114-95), this protein is Nucleoside diphosphate kinase.